Here is a 1585-residue protein sequence, read N- to C-terminus: Histone acetyltransferase lsy-12 (1585 aa).

Disordered stretches follow at residues methionine 1–glutamate 37 and glycine 279–valine 491. Residues proline 23 to glutamate 37 are compositionally biased toward basic and acidic residues. Positions glycine 279–serine 296 are enriched in polar residues. Positions threonine 302–arginine 312 are enriched in basic and acidic residues. Composition is skewed to polar residues over residues leucine 355 to valine 364 and serine 411 to leucine 426. Over residues serine 431 to serine 440 the composition is skewed to low complexity. Over residues glutamine 453–lysine 469 the composition is skewed to basic residues. Acidic residues predominate over residues glutamine 477–valine 491. The region spanning glutamate 544–proline 830 is the MYST-type HAT domain. The C2HC MYST-type zinc finger occupies leucine 577 to leucine 602. Lysine 644 carries the post-translational modification N6-acetyllysine; by autocatalysis. Serine 685–threonine 689 is a binding site for acetyl-CoA. Catalysis depends on glutamate 720, which acts as the Proton donor/acceptor. Serine 724 and lysine 815 together coordinate acetyl-CoA. 2 stretches are compositionally biased toward basic and acidic residues: residues serine 844–arginine 855 and valine 947–glutamate 956. Disordered stretches follow at residues serine 844–glutamate 903, glutamate 927–serine 1262, glutamate 1286–histidine 1373, and histidine 1431–glutamine 1507. The span at asparagine 977–glycine 999 shows a compositional bias: polar residues. Residues threonine 1011–aspartate 1022 show a composition bias toward acidic residues. Positions aspartate 1029–serine 1046 are enriched in basic and acidic residues. Basic residues predominate over residues arginine 1047–alanine 1060. Basic and acidic residues-rich tracts occupy residues valine 1070–asparagine 1081 and aspartate 1135–arginine 1151. Residues proline 1164 to proline 1173 are compositionally biased toward low complexity. A compositionally biased stretch (polar residues) spans leucine 1185–glutamine 1194. Residues asparagine 1196–proline 1207 are compositionally biased toward basic and acidic residues. Composition is skewed to polar residues over residues alanine 1298–proline 1317 and histidine 1324–proline 1333. Positions glutamine 1482–glutamine 1493 are enriched in low complexity.

Belongs to the MYST (SAS/MOZ) family.

The enzyme catalyses L-lysyl-[protein] + acetyl-CoA = N(6)-acetyl-L-lysyl-[protein] + CoA + H(+). Functionally, probable histone acetyltransferase. Required to initiate and then maintain lateralized gene expression in the ASE sensory neurons. Involved in determining cell fate in the ASE neurons. This chain is Histone acetyltransferase lsy-12, found in Caenorhabditis elegans.